The following is a 372-amino-acid chain: Lipoyl synthase (372 aa).

Positions 37, 42, 48, 63, 67, 70, and 292 each coordinate [4Fe-4S] cluster. In terms of domain architecture, Radical SAM core spans Trp49 to Leu281. Positions Leu338–Arg372 are disordered. Residues Ala354–Arg372 are compositionally biased toward low complexity.

The protein belongs to the radical SAM superfamily. Lipoyl synthase family. [4Fe-4S] cluster is required as a cofactor.

It is found in the cytoplasm. The enzyme catalyses [[Fe-S] cluster scaffold protein carrying a second [4Fe-4S](2+) cluster] + N(6)-octanoyl-L-lysyl-[protein] + 2 oxidized [2Fe-2S]-[ferredoxin] + 2 S-adenosyl-L-methionine + 4 H(+) = [[Fe-S] cluster scaffold protein] + N(6)-[(R)-dihydrolipoyl]-L-lysyl-[protein] + 4 Fe(3+) + 2 hydrogen sulfide + 2 5'-deoxyadenosine + 2 L-methionine + 2 reduced [2Fe-2S]-[ferredoxin]. Its pathway is protein modification; protein lipoylation via endogenous pathway; protein N(6)-(lipoyl)lysine from octanoyl-[acyl-carrier-protein]: step 2/2. Catalyzes the radical-mediated insertion of two sulfur atoms into the C-6 and C-8 positions of the octanoyl moiety bound to the lipoyl domains of lipoate-dependent enzymes, thereby converting the octanoylated domains into lipoylated derivatives. The polypeptide is Lipoyl synthase (Sorangium cellulosum (strain So ce56) (Polyangium cellulosum (strain So ce56))).